Consider the following 751-residue polypeptide: Ribosomal RNA large subunit methyltransferase K/L (751 aa).

The 112-residue stretch at 44-155 folds into the THUMP domain; that stretch reads LAYRTCLWSR…KNKLVLSIDL (112 aa).

This sequence belongs to the methyltransferase superfamily. RlmKL family.

It localises to the cytoplasm. The catalysed reaction is guanosine(2445) in 23S rRNA + S-adenosyl-L-methionine = N(2)-methylguanosine(2445) in 23S rRNA + S-adenosyl-L-homocysteine + H(+). It catalyses the reaction guanosine(2069) in 23S rRNA + S-adenosyl-L-methionine = N(2)-methylguanosine(2069) in 23S rRNA + S-adenosyl-L-homocysteine + H(+). Specifically methylates the guanine in position 2445 (m2G2445) and the guanine in position 2069 (m7G2069) of 23S rRNA. The sequence is that of Ribosomal RNA large subunit methyltransferase K/L from Cellvibrio japonicus (strain Ueda107) (Pseudomonas fluorescens subsp. cellulosa).